A 432-amino-acid polypeptide reads, in one-letter code: Adenylosuccinate synthetase (432 aa).

Residues 13-19 (GDEGKGK) and 41-43 (GHT) each bind GTP. The active-site Proton acceptor is the aspartate 14. Residues aspartate 14 and glycine 41 each contribute to the Mg(2+) site. IMP is bound by residues 14–17 (DEGK), 39–42 (NAGH), threonine 130, arginine 144, glutamine 225, threonine 240, and arginine 304. Histidine 42 functions as the Proton donor in the catalytic mechanism. A substrate-binding site is contributed by 300–306 (ATTGRRR). GTP-binding positions include arginine 306, 332-334 (KLD), and 414-416 (STG).

It belongs to the adenylosuccinate synthetase family. Homodimer. Requires Mg(2+) as cofactor.

It is found in the cytoplasm. It carries out the reaction IMP + L-aspartate + GTP = N(6)-(1,2-dicarboxyethyl)-AMP + GDP + phosphate + 2 H(+). The protein operates within purine metabolism; AMP biosynthesis via de novo pathway; AMP from IMP: step 1/2. Its function is as follows. Plays an important role in the de novo pathway of purine nucleotide biosynthesis. Catalyzes the first committed step in the biosynthesis of AMP from IMP. The sequence is that of Adenylosuccinate synthetase from Methylococcus capsulatus (strain ATCC 33009 / NCIMB 11132 / Bath).